A 447-amino-acid polypeptide reads, in one-letter code: Argininosuccinate synthase (447 aa).

ATP contacts are provided by residues 17 to 25 and Ala43; that span reads AFSGGLDTS. L-citrulline is bound at residue Tyr99. ATP-binding residues include Gly129 and Thr131. L-aspartate is bound by residues Thr131, Asn135, and Asp136. L-citrulline is bound at residue Asn135. Asp136 is an ATP binding site. L-citrulline is bound by residues Arg139 and Ser192. An ATP-binding site is contributed by Asp194. Residues Thr201, Glu203, and Glu280 each coordinate L-citrulline.

The protein belongs to the argininosuccinate synthase family. Type 2 subfamily. Homotetramer.

The protein resides in the cytoplasm. It carries out the reaction L-citrulline + L-aspartate + ATP = 2-(N(omega)-L-arginino)succinate + AMP + diphosphate + H(+). The protein operates within amino-acid biosynthesis; L-arginine biosynthesis; L-arginine from L-ornithine and carbamoyl phosphate: step 2/3. This chain is Argininosuccinate synthase, found in Escherichia coli O8 (strain IAI1).